The sequence spans 837 residues: Outer membrane usher protein PsaC (837 aa).

The signal sequence occupies residues methionine 1 to alanine 23.

It belongs to the fimbrial export usher family.

Its subcellular location is the cell outer membrane. Its function is as follows. Involved in the export and assembly of PsaA (pH 6) fimbrial subunits across the outer membrane. The chain is Outer membrane usher protein PsaC (psaC) from Yersinia pestis.